Consider the following 105-residue polypeptide: MAGRSGVNDEDLLKAVKIIKILYQSNPYPDSSQGTRQARRNRRRRWRARQRQIRAISERILGAYLGGPQEPVDLPLPPLGRLTLDHKEDSGDPGTESQQGTATTE.

Ser-5 is subject to Phosphoserine; by host CK2. Positions Ile-18–Asn-26 are homomultimerization. Residues Gln-24–Thr-35 are compositionally biased toward polar residues. Disordered regions lie at residues Gln-24–Arg-49 and Leu-65–Glu-105. The short motif at Thr-35–Arg-51 is the Nuclear localization signal and RNA-binding (RRE) element. Residues Gln-37–Arg-49 are compositionally biased toward basic residues. Positions Leu-74 to Asp-85 match the Nuclear export signal and binding to XPO1 motif. The segment covering Thr-95 to Glu-105 has biased composition (polar residues).

It belongs to the HIV-1 REV protein family. Homomultimer; when bound to the RRE. Multimeric assembly is essential for activity and may involve XPO1. Binds to human KPNB1, XPO1, TNPO1, RANBP5 and IPO7. Interacts with the viral Integrase. Interacts with human KHDRBS1. Interacts with human NAP1; this interaction decreases Rev multimerization and stimulates its activity. Interacts with human DEAD-box helicases DDX3 and DDX24; these interactions may serve for viral RNA export to the cytoplasm and packaging, respectively. Interacts with human PSIP1; this interaction may inhibit HIV-1 DNA integration by promoting dissociation of the Integrase-LEDGF/p75 complex. Post-translationally, asymmetrically arginine dimethylated at one site by host PRMT6. Methylation impairs the RNA-binding activity and export of viral RNA from the nucleus to the cytoplasm. Phosphorylated by protein kinase CK2. Presence of, and maybe binding to the N-terminus of the regulatory beta subunit of CK2 is necessary for CK2-mediated Rev's phosphorylation.

Its subcellular location is the host nucleus. The protein localises to the host nucleolus. The protein resides in the host cytoplasm. Functionally, escorts unspliced or incompletely spliced viral pre-mRNAs (late transcripts) out of the nucleus of infected cells. These pre-mRNAs carry a recognition sequence called Rev responsive element (RRE) located in the env gene, that is not present in fully spliced viral mRNAs (early transcripts). This function is essential since most viral proteins are translated from unspliced or partially spliced pre-mRNAs which cannot exit the nucleus by the pathway used by fully processed cellular mRNAs. Rev itself is translated from a fully spliced mRNA that readily exits the nucleus. Rev's nuclear localization signal (NLS) binds directly to KPNB1/Importin beta-1 without previous binding to KPNA1/Importin alpha-1. KPNB1 binds to the GDP bound form of RAN (Ran-GDP) and targets Rev to the nucleus. In the nucleus, the conversion from Ran-GDP to Ran-GTP dissociates Rev from KPNB1 and allows Rev's binding to the RRE in viral pre-mRNAs. Rev multimerization on the RRE via cooperative assembly exposes its nuclear export signal (NES) to the surface. Rev can then form a complex with XPO1/CRM1 and Ran-GTP, leading to nuclear export of the complex. Conversion from Ran-GTP to Ran-GDP mediates dissociation of the Rev/RRE/XPO1/RAN complex, so that Rev can return to the nucleus for a subsequent round of export. Beside KPNB1, also seems to interact with TNPO1/Transportin-1, RANBP5/IPO5 and IPO7/RANBP7 for nuclear import. The nucleoporin-like HRB/RIP is an essential cofactor that probably indirectly interacts with Rev to release HIV RNAs from the perinuclear region to the cytoplasm. The sequence is that of Protein Rev from Homo sapiens (Human).